Here is a 73-residue protein sequence, read N- to C-terminus: Small, acid-soluble spore protein C2 (73 aa).

The protein belongs to the alpha/beta-type SASP family.

In terms of biological role, SASP are bound to spore DNA. They are double-stranded DNA-binding proteins that cause DNA to change to an a-like conformation. They protect the DNA backbone from chemical and enzymatic cleavage and are thus involved in dormant spore's high resistance to UV light. The polypeptide is Small, acid-soluble spore protein C2 (SASP-C2) (Priestia megaterium (Bacillus megaterium)).